A 413-amino-acid polypeptide reads, in one-letter code: Histidine--tRNA ligase (413 aa).

Belongs to the class-II aminoacyl-tRNA synthetase family.

It is found in the cytoplasm. The enzyme catalyses tRNA(His) + L-histidine + ATP = L-histidyl-tRNA(His) + AMP + diphosphate + H(+). The sequence is that of Histidine--tRNA ligase from Methanosarcina acetivorans (strain ATCC 35395 / DSM 2834 / JCM 12185 / C2A).